The chain runs to 509 residues: Sensor histidine kinase TrcS (509 aa).

Helical transmembrane passes span 24–44 and 188–208; these read LLLGVLAVVTVVLVAVGVVSV and VALVGAALVVTAALTVWVVGY. The 63-residue stretch at 207-269 folds into the HAMP domain; sequence GYALRPLRRV…LLDNVDGALA (63 aa). In terms of domain architecture, Histidine kinase spans 284–502; that stretch reads DASHELRTPL…VFRVRLPMIE (219 aa). His-287 carries the phosphohistidine; by autocatalysis modification.

It depends on a divalent metal cation as a cofactor. In terms of processing, autophosphorylated.

The protein localises to the cell membrane. It carries out the reaction ATP + protein L-histidine = ADP + protein N-phospho-L-histidine.. Member of the two-component regulatory system TrcS/TrcR. Phosphorylates TrcR. The TrcR-TrcS regulatory system may act as a transition regulatory system involved in adapting to an intracellular environment and transitioning from latency to reactivation. This Mycobacterium tuberculosis (strain ATCC 25618 / H37Rv) protein is Sensor histidine kinase TrcS.